The primary structure comprises 167 residues: Large ribosomal subunit protein bL9 (167 aa).

It belongs to the bacterial ribosomal protein bL9 family.

Binds to the 23S rRNA. The protein is Large ribosomal subunit protein bL9 of Chlamydia trachomatis serovar L2 (strain ATCC VR-902B / DSM 19102 / 434/Bu).